Here is a 1189-residue protein sequence, read N- to C-terminus: MTPKKKIFQNFQANDNEILSPTKKGIKLNVSKLNILNFENTIITKEKTNYEYKASLNKEIDEVLNNNNIINTHNNKKNNLNLYDYNNIKNSTHEFYIDLNEQNKQTIKYNDNKFTPINKKEKYNLDETSSSSISSSLTNISSSLTNISSSLTNISSSLSNSLDEKKKKKKIKKNNSTIINILNNNNNNSNIHHNNKHNIYNKYNISKKPQNKEIHTLPSNHQIKKKSNNTYNTCQQKMKKNISKKNTHSIKNNQNDKNKEKNKEKDKNIKKDRDKDIQTKRTSHQSQDQNNHFERRILRSYTRNNDNVKNNLKNNINNNNTLKRSSQSVRIDSDLSSAHQNKRIKYDEKNIIHRNNNNNNNNNNKTTSNNHNKNNKINNNNPSENYKKQTDTKHTNNTQNNKYNKTKTTNTFKHPSKDHTDVNTKTFKSRYINTYTMEEVQKSIKSNTIKLVQENSCEYQDGIIYESIQINDEEYSIGEDVLIFYTPNNNTYNAKSDDKKNQNNNNIKENIYLLKKGKISSFYKSTNSKVIEVEICFYYDESDEQRIRELEKKQTSRRCKEDFNIYLDDDTKYYNLLGNIHFTILDANYIYKKIYVYNEIETFEEDTHARKGKNKFLCTHFIKDKEDRLCFIPNEDHWDNLVLGSSDLYYYFANEKKLNKNKSLKLIIEKLKINDKINDTQANQKKNNKKEYMNKAQTTTNVKANTHTKTLNDHNKSKTTKNKESSSTSFLQDVKKKSDPHNNDFQSSLKEDQENYYINLLKNIKDPTDKAIRMMQLDVVPKYLPCREKEIKEVHGFLESGIKQSGSNQILYISGMPGTGKTATVYSVIQLLQIKSRKKLLPSFNVFEINGMNVVHPNAAYQVFYKQLFNKKPPNALNSFKIIDRLFNKSQKDNRDVSILIIDEIDYLITKTQKVLFTLFDWPTKINSKLILIAISNTMDLPDRLIPRCRSRLAFGRLVFSPYKGDEIEKIIKERLENCKEIIDHTAIQLCARKVANVSGDIRKALQICRKAFENKRGHKIVPRDITEATNQLFDSPLTNAINYLPWAFKIFLTCLIIELRIINEFVIPYKKVVNRYKILIETSGKYIGMCSDNELFKIMLDKLVKMGILLIRPYIPLENISKNKSKEALLGFNESSKKGNNQKITRAQVSPDIDKESGDMGIELNVETQLIITALMKDPDCSKKLNFY.

The tract at residues 1-53 (MTPKKKIFQNFQANDNEILSPTKKGIKLNVSKLNILNFENTIITKEKTNYEYK) is required for peripherial nuclear localization. Threonine 2 carries the post-translational modification Phosphothreonine. Serine 20 carries the phosphoserine modification. Leucine heptad repeat repeat units lie at residues 137-143 (LTNISSS), 144-150 (LTNISSS), 151-157 (LTNISSS), and 158-164 (LSNSLDE). Basic residues predominate over residues 239-248 (KKNISKKNTH). 2 disordered regions span residues 239–421 (KKNI…DHTD) and 679–749 (DTQA…QSSL). A compositionally biased stretch (basic and acidic residues) spans 254 to 279 (QNDKNKEKNKEKDKNIKKDRDKDIQT). A compositionally biased stretch (low complexity) spans 304 to 320 (NNDNVKNNLKNNINNNN). Residues 321–339 (TLKRSSQSVRIDSDLSSAH) show a composition bias toward polar residues. Residues 353-381 (HRNNNNNNNNNNKTTSNNHNKNNKINNNN) are compositionally biased toward low complexity. A compositionally biased stretch (basic and acidic residues) spans 385–394 (NYKKQTDTKH). Residues 395–411 (TNNTQNNKYNKTKTTNT) are compositionally biased toward low complexity. Polar residues predominate over residues 695–709 (KAQTTTNVKANTHTK). Basic and acidic residues-rich tracts occupy residues 710-724 (TLNDHNKSKTTKNKE) and 733-742 (DVKKKSDPHN). Residues valine 780 and 815–823 (GMPGTGKTA) each bind ATP. Mg(2+)-binding residues include aspartate 903 and glutamate 904. ATP is bound at residue glutamate 904. The PIP-box motif lies at 913 to 922 (QKVLFTLFDW). ATP contacts are provided by asparagine 937 and arginine 1003.

Belongs to the ORC1 family. In terms of assembly, component of the origin recognition complex (ORC). Interacts (via PIP-box) with PCNA1; the interaction occurs during DNA replication in trophozoites. In schizonts, may be phosphorylated by PK5; phosphorylation leads to ORC1 dissociation from the telomeres and var gene promoters, translocation to the cytoplasm, where it is degraded by the proteasome.

Its subcellular location is the nucleus. It is found in the chromosome. It localises to the telomere. The protein resides in the nucleolus. It carries out the reaction ATP + H2O = ADP + phosphate + H(+). In terms of biological role, component of the origin recognition complex (ORC) that binds origins of replication and thus may regulate the initiation of DNA replication. DNA-binding may not be ATP-dependent. In a SIR2A/Sir2-dependent manner, binds to and silences telomers and subtelomeric repeat regions (TAREs). In a SIR2A/Sir2-dependent manner, binds to promoters of var genes localized next to TAREs resulting in their silencing. In Plasmodium falciparum (isolate 3D7), this protein is Origin recognition complex subunit 1.